A 140-amino-acid chain; its full sequence is Ribosome maturation factor RimP (140 aa).

Belongs to the RimP family.

The protein resides in the cytoplasm. Required for maturation of 30S ribosomal subunits. The chain is Ribosome maturation factor RimP from Campylobacter jejuni subsp. doylei (strain ATCC BAA-1458 / RM4099 / 269.97).